Consider the following 228-residue polypeptide: MILIEHILGNVKKDPIWQEKLKDATFDLLVLDQREAQKSRCRKLSTQGLDLGISLDRHVVLADGDVLAWDEKNRVAVVVQINLRDVMVIDLSELKSRSPDELIKTCFELGHALGNQHWKAVTKHNEVYVPLTVATTMMDSVMRTHGFQHLPFRFVKGAEILPLLSNSEARLLFGGAEDTDTHVHVASPLDEPHGSGLHIHAIHSHGDGHSHDHDHSHSHGDHDHDHKH.

Residues 188 to 228 form a disordered region; it reads PLDEPHGSGLHIHAIHSHGDGHSHDHDHSHSHGDHDHDHKH. The segment covering 204–228 has biased composition (basic and acidic residues); it reads SHGDGHSHDHDHSHSHGDHDHDHKH.

It belongs to the UreE family.

Its subcellular location is the cytoplasm. In terms of biological role, involved in urease metallocenter assembly. Binds nickel. Probably functions as a nickel donor during metallocenter assembly. This is Urease accessory protein UreE from Yersinia kristensenii.